Here is a 101-residue protein sequence, read N- to C-terminus: MEIKKPALAGTLESSDCIVSVEPSMDNTIEINLTSTVKKQFGNEIIKVAKETLKNLGVNSVVMEINDKGALNCVIEARIEAAVCRASEINEFDWGNYKCQD.

At Ser-14 the chain carries O-(phosphoribosyl dephospho-coenzyme A)serine.

It belongs to the CitD family. Oligomer with a subunit composition of (alpha,beta,gamma)6.

Its subcellular location is the cytoplasm. Covalent carrier of the coenzyme of citrate lyase. This Clostridium perfringens (strain 13 / Type A) protein is Citrate lyase acyl carrier protein.